The sequence spans 117 residues: NADH-ubiquinone oxidoreductase chain 3 (117 aa).

The next 3 helical transmembrane spans lie at 8-28 (LIYF…SFIF), 61-81 (LVAI…PWAV), and 86-106 (IGFF…IGFI).

The protein belongs to the complex I subunit 3 family.

The protein resides in the mitochondrion membrane. The enzyme catalyses a ubiquinone + NADH + 5 H(+)(in) = a ubiquinol + NAD(+) + 4 H(+)(out). Its function is as follows. Core subunit of the mitochondrial membrane respiratory chain NADH dehydrogenase (Complex I) that is believed to belong to the minimal assembly required for catalysis. Complex I functions in the transfer of electrons from NADH to the respiratory chain. The immediate electron acceptor for the enzyme is believed to be ubiquinone. This chain is NADH-ubiquinone oxidoreductase chain 3 (ND3), found in Tetraselmis subcordiformis (Marine green alga).